Here is a 130-residue protein sequence, read N- to C-terminus: Abscisic acid and environmental stress-inducible protein TAS14 (130 aa).

Residues 1–130 are disordered; sequence MAQYGNQDQM…KIKDKIPGMH (130 aa). A compositionally biased stretch (gly residues) spans 27 to 58; the sequence is QGTGTGGMMGGTGTGGMMGGTGGEYGTQGMGT. Basic and acidic residues-rich tracts occupy residues 61-73 and 92-130; these read HHHE…RRSD and KEKI…PGMH.

Belongs to the plant dehydrin family.

This is Abscisic acid and environmental stress-inducible protein TAS14 (TAS14) from Solanum lycopersicum (Tomato).